Reading from the N-terminus, the 81-residue chain is D-alanyl carrier protein (81 aa).

In terms of domain architecture, Carrier spans 1–81 (MADEAIKNGV…KIIAKVEQAQ (81 aa)). O-(pantetheine 4'-phosphoryl)serine is present on serine 39.

Belongs to the DltC family. 4'-phosphopantetheine is transferred from CoA to a specific serine of apo-DCP.

It is found in the cytoplasm. It participates in cell wall biogenesis; lipoteichoic acid biosynthesis. Functionally, carrier protein involved in the D-alanylation of lipoteichoic acid (LTA). The loading of thioester-linked D-alanine onto DltC is catalyzed by D-alanine--D-alanyl carrier protein ligase DltA. The DltC-carried D-alanyl group is further transferred to cell membrane phosphatidylglycerol (PG) by forming an ester bond, probably catalyzed by DltD. D-alanylation of LTA plays an important role in modulating the properties of the cell wall in Gram-positive bacteria, influencing the net charge of the cell wall. This is D-alanyl carrier protein from Lacticaseibacillus rhamnosus (Lactobacillus rhamnosus).